The chain runs to 646 residues: Phosphomethylpyrimidine synthase (646 aa).

Substrate contacts are provided by residues Asn235, Met264, Tyr293, His329, 349 to 351 (SRG), 390 to 393 (DGLR), and Glu429. His433 is a Zn(2+) binding site. Tyr456 contacts substrate. His497 is a Zn(2+) binding site. Residues Cys577, Cys580, and Cys585 each contribute to the [4Fe-4S] cluster site. A disordered region spans residues 624–646 (KSEEFRATGSELYHPAVHAEADE).

This sequence belongs to the ThiC family. In terms of assembly, homodimer. The cofactor is [4Fe-4S] cluster.

It carries out the reaction 5-amino-1-(5-phospho-beta-D-ribosyl)imidazole + S-adenosyl-L-methionine = 4-amino-2-methyl-5-(phosphooxymethyl)pyrimidine + CO + 5'-deoxyadenosine + formate + L-methionine + 3 H(+). It functions in the pathway cofactor biosynthesis; thiamine diphosphate biosynthesis. Functionally, catalyzes the synthesis of the hydroxymethylpyrimidine phosphate (HMP-P) moiety of thiamine from aminoimidazole ribotide (AIR) in a radical S-adenosyl-L-methionine (SAM)-dependent reaction. In Vibrio parahaemolyticus serotype O3:K6 (strain RIMD 2210633), this protein is Phosphomethylpyrimidine synthase.